A 130-amino-acid polypeptide reads, in one-letter code: NADH-quinone oxidoreductase subunit A (130 aa).

A run of 3 helical transmembrane segments spans residues Y17 to L37, L74 to V94, and L99 to V119.

Belongs to the complex I subunit 3 family. As to quaternary structure, NDH-1 is composed of 14 different subunits. Subunits NuoA, H, J, K, L, M, N constitute the membrane sector of the complex.

The protein localises to the cell inner membrane. The enzyme catalyses a quinone + NADH + 5 H(+)(in) = a quinol + NAD(+) + 4 H(+)(out). Its function is as follows. NDH-1 shuttles electrons from NADH, via FMN and iron-sulfur (Fe-S) centers, to quinones in the respiratory chain. The immediate electron acceptor for the enzyme in this species is believed to be ubiquinone. Couples the redox reaction to proton translocation (for every two electrons transferred, four hydrogen ions are translocated across the cytoplasmic membrane), and thus conserves the redox energy in a proton gradient. This chain is NADH-quinone oxidoreductase subunit A, found in Neorickettsia sennetsu (strain ATCC VR-367 / Miyayama) (Ehrlichia sennetsu).